We begin with the raw amino-acid sequence, 916 residues long: Calcium homeostasis endoplasmic reticulum protein (916 aa).

Methionine 1 is subject to N-acetylmethionine. The stretch at valine 15 to lysine 57 is one SURP motif repeat. Residue lysine 18 is modified to N6-acetyllysine. In terms of domain architecture, CID spans glutamate 149–glycine 289. Disordered stretches follow at residues glutamine 336–proline 549 and histidine 601–asparagine 635. Positions threonine 354–threonine 374 are enriched in pro residues. A compositionally biased stretch (polar residues) spans tryptophan 480 to glutamate 501. The span at proline 525–proline 541 shows a compositional bias: pro residues. The residue at position 714 (tyrosine 714) is a Phosphotyrosine. The segment at arginine 722–aspartate 878 is disordered. Basic residues predominate over residues serine 739 to serine 749. Low complexity predominate over residues serine 750 to arginine 766. A compositionally biased stretch (basic residues) spans serine 767–serine 815. Residues serine 813, serine 815, and serine 817 each carry the phosphoserine modification. Threonine 819 bears the Phosphothreonine mark. Serine 828 is subject to Phosphoserine. Positions glutamate 841 to aspartate 891 constitute a G-patch domain. Residue lysine 844 forms a Glycyl lysine isopeptide (Lys-Gly) (interchain with G-Cter in SUMO2) linkage. A phosphoserine mark is found at serine 855 and serine 857. Residue lysine 872 forms a Glycyl lysine isopeptide (Lys-Gly) (interchain with G-Cter in SUMO2) linkage. Lysine 879 is subject to N6-acetyllysine. Position 904 is a phosphoserine (serine 904).

As to expression, expressed in brain, placenta, lung, liver, kidney, pancreas, cardiac and skeletal muscle, and in cultured HEL and Dami cells.

It is found in the cytoplasm. It localises to the perinuclear region. The protein resides in the endoplasmic reticulum. Its function is as follows. Involved in calcium homeostasis, growth and proliferation. In Homo sapiens (Human), this protein is Calcium homeostasis endoplasmic reticulum protein.